The primary structure comprises 957 residues: Leucine--tRNA ligase (957 aa).

A 'HIGH' region motif is present at residues 70 to 81 (PYPSGAGLHVGH). Residues 727–731 (KMGKS) carry the 'KMSKS' region motif. Position 730 (lysine 730) interacts with ATP.

It belongs to the class-I aminoacyl-tRNA synthetase family.

It is found in the cytoplasm. It catalyses the reaction tRNA(Leu) + L-leucine + ATP = L-leucyl-tRNA(Leu) + AMP + diphosphate. This Corynebacterium efficiens (strain DSM 44549 / YS-314 / AJ 12310 / JCM 11189 / NBRC 100395) protein is Leucine--tRNA ligase.